The primary structure comprises 291 residues: MTVDSKPQLQRLAADADVDRMCRLLEEDGAFILKGLLPFDVVESFNRELDVQMAIPPPKGERLLADKYPPHFKYVPNVATTCPTFRNTILINPVIHAICEAYFQRTGDYWLSAAFLREIESGMPAQPFHRDDATHPLMHYQPLEAPPISLSVIFPLTEFTEENGATEVILGSHRWTEVGTPERDQAVLATMDPGDVLIVRQRVVHAGGGNRTTAGKPRRVVLAYFNSVQLTPFETYRTMPREMVESMTVLGQRMLGWRTMKPSDPNIVGINLIDDKRLENVLQLKAADSPA.

Residue Tyr68 is part of the active site.

The protein belongs to the PhyH family. In terms of assembly, homodimer. Fe cation is required as a cofactor.

The catalysed reaction is fumitremorgin B + 2-oxoglutarate + AH2 + 2 O2 = verruculogen + succinate + A + CO2 + H2O. The protein operates within mycotoxin biosynthesis. In terms of biological role, verruculogen synthase; part of the gene cluster that mediates the biosynthesis of fumitremorgins, indole alkaloids that carry not only intriguing chemical structures, but also interesting biological and pharmacological activities. The biosynthesis of fumitremorgin-type alkaloids begins by condensation of the two amino acids L-tryptophan and L-proline to brevianamide F, catalyzed by the non-ribosomal peptide synthetase ftmA. Brevianamide F is then prenylated by the prenyltransferase ftmPT1/ftmB in the presence of dimethylallyl diphosphate, resulting in the formation of tryprostatin B. The three cytochrome P450 monooxygenases, ftmP450-1/ftmC, ftmP450-2/ftmE and ftmP450-3/FtmG, are responsible for the conversion of tryprostatin B to 6-hydroxytryprostatin B, tryprostatin A to fumitremorgin C and fumitremorgin C to 12,13-dihydroxyfumitremorgin C, respectively. The putative methyltransferase ftmMT/ftmD is expected for the conversion of 6-hydroxytryprostatin B to tryprostatin A. FtmPT2/FtmH catalyzes the prenylation of 12,13-dihydroxyfumitre-morgin C in the presence of dimethylallyl diphosphate, resulting in the formation of fumitremorgin B. Fumitremorgin B is further converted to verruculogen by ftmOx1/ftmF via the insertion of an endoperoxide bond between the two prenyl moieties. In some fungal species, verruculogen is further converted to fumitremorgin A, but the enzymes involved in this step have not been identified yet. This chain is Verruculogen synthase, found in Aspergillus fumigatus (Neosartorya fumigata).